Consider the following 367-residue polypeptide: uncharacterized protein (367 aa).

This sequence to M.tuberculosis Rv0502.

This is an uncharacterized protein from Mycobacterium leprae (strain TN).